The primary structure comprises 438 residues: ATP-dependent RNA helicase SUB2 (438 aa).

Positions 1 to 19 (MSHEGEEDLLEYSDNEQEI) are enriched in acidic residues. Residues 1–44 (MSHEGEEDLLEYSDNEQEIQVDNTKATEVAGNGEEAADGKDGDK) are disordered. Positions 54-82 (TGFKDFLLKPELSRAIIDCGFEHPSEVQQ) match the Q motif motif. The region spanning 85-260 (IPQSIHGTDV…RRFLQNPLEI (176 aa)) is the Helicase ATP-binding domain. 98 to 105 (AKSGLGKT) is an ATP binding site. A DECD box motif is present at residues 207-210 (DECD). The region spanning 272–433 (GLQQYYIRLE…EFPEEGVDPS (162 aa)) is the Helicase C-terminal domain.

Belongs to the DEAD box helicase family. DECD subfamily.

Its subcellular location is the nucleus. It carries out the reaction ATP + H2O = ADP + phosphate + H(+). Its function is as follows. ATP-binding RNA helicase involved in transcription elongation and required for the export of mRNA out of the nucleus. SUB2 also plays a role in pre-mRNA splicing and spliceosome assembly. May be involved in rDNA and telomeric silencing, and maintenance of genome integrity. This Eremothecium gossypii (strain ATCC 10895 / CBS 109.51 / FGSC 9923 / NRRL Y-1056) (Yeast) protein is ATP-dependent RNA helicase SUB2 (SUB2).